The sequence spans 314 residues: Oxidoreductase poxI (314 aa).

Belongs to the NmrA-type oxidoreductase family. Isoflavone reductase subfamily.

It functions in the pathway secondary metabolite biosynthesis. Oxidoreductase; part of the gene cluster that mediates the biosynthesis of oxaleimides, cytotoxic compounds containing an unusual disubstituted succinimide moiety. The first step of the pathway is provided by the HR-PKS poxF that serves in a new mode of collaborative biosynthesis with the PKS-NRPS poxE, by providing the olefin containing amino acid substrate via the synthesis of an ACP-bound dec-4-enoate. The cytochrome P450 monooxygenase poxM-catalyzed oxidation at the alpha-position creates the enzyme-bound 2-hydroxydec-4-enoyl-ACP thioester, which may be prone to spontaneous hydrolysis to yield 2-hydroxydec-4-enoic acid due to increased electrophilicity of the carbonyl. 2-hydroxydec-4-enoic acid can then be further oxidized by poxM to yield the alpha-ketoacid 2-oxodec-4-enoicacid, which is reductively aminated by the aminotransferase poxL to yield (S,E)-2-aminodec-4-enoic acid. The Hybrid PKS-NRPS synthetase poxE then performs condensation between the octaketide product of its PKS modules and the amino group of (S,E)-2-aminodec-4-enoic acid which is activated and incorporated by the adenylation domain. The resulting aminoacyl product can be cyclized by the Diels-Alderase PoxQ and reductively released by the reductive (R) domain of poxE to yield an aldehyde intermediate. The released aldehyde is then substrate for a Knoevenagel condensation by the hydrolyase poxO followed by an oxidation at the 5-position of the pyrrolidone ring. The presence of the olefin from the amino acid building block allows for migration of the substituted allyl group to occur. This allylic transposition reaction takes place in a conjugate addition, semipinacol-like fashion to yield a succinimide intermediate. Iterative two-electron oxidations of the C7 methyl of the succinimide intermediate to the carboxylic acid can be catalyzed by one of two remaining cytochrome P450 monooxygenasess poxC or poxD to yield oxaleimide A. Subsequent oxidation yields the maleimide scaffold oxaleimide I. Both oxaleimide A and oxaleimide I can undergo oxidative modifications in the decalin ring to yield the series of products oxaleimides B to H. The protein is Oxidoreductase poxI of Penicillium oxalicum (strain 114-2 / CGMCC 5302) (Penicillium decumbens).